The primary structure comprises 431 residues: Phosphomethylpyrimidine synthase (431 aa).

Residues asparagine 66, methionine 95, tyrosine 124, histidine 163, 185–187, 226–229, and glutamate 265 contribute to the substrate site; these read SRG and DGLR. Residue histidine 269 coordinates Zn(2+). Tyrosine 292 lines the substrate pocket. Histidine 333 serves as a coordination point for Zn(2+). [4Fe-4S] cluster is bound by residues cysteine 408, cysteine 411, and cysteine 415.

The protein belongs to the ThiC family. The cofactor is [4Fe-4S] cluster.

It carries out the reaction 5-amino-1-(5-phospho-beta-D-ribosyl)imidazole + S-adenosyl-L-methionine = 4-amino-2-methyl-5-(phosphooxymethyl)pyrimidine + CO + 5'-deoxyadenosine + formate + L-methionine + 3 H(+). The protein operates within cofactor biosynthesis; thiamine diphosphate biosynthesis. Its function is as follows. Catalyzes the synthesis of the hydroxymethylpyrimidine phosphate (HMP-P) moiety of thiamine from aminoimidazole ribotide (AIR) in a radical S-adenosyl-L-methionine (SAM)-dependent reaction. In Dehalococcoides mccartyi (strain CBDB1), this protein is Phosphomethylpyrimidine synthase.